A 187-amino-acid polypeptide reads, in one-letter code: Probable cobalt-precorrin-6B C(15)-methyltransferase (decarboxylating) (187 aa).

Residues threonine 17, 41-45 (GCGTG), aspartate 62, and glycine 91 contribute to the S-adenosyl-L-methionine site.

The protein belongs to the methyltransferase superfamily. Archaeal-type CbiT family.

It carries out the reaction Co-precorrin-6B + S-adenosyl-L-methionine = Co-precorrin-7 + S-adenosyl-L-homocysteine + CO2. Its pathway is cofactor biosynthesis; adenosylcobalamin biosynthesis; cob(II)yrinate a,c-diamide from sirohydrochlorin (anaerobic route): step 8/10. In terms of biological role, catalyzes the methylation of C-15 in cobalt-precorrin-6B followed by the decarboxylation of C-12 to form cobalt-precorrin-7. The protein is Probable cobalt-precorrin-6B C(15)-methyltransferase (decarboxylating) of Methanobrevibacter smithii (strain ATCC 35061 / DSM 861 / OCM 144 / PS).